A 238-amino-acid polypeptide reads, in one-letter code: Ribonuclease PH (238 aa).

Phosphate is bound by residues Arg-86 and 124-126; that span reads GTR.

This sequence belongs to the RNase PH family. In terms of assembly, homohexameric ring arranged as a trimer of dimers.

It catalyses the reaction tRNA(n+1) + phosphate = tRNA(n) + a ribonucleoside 5'-diphosphate. Its function is as follows. Phosphorolytic 3'-5' exoribonuclease that plays an important role in tRNA 3'-end maturation. Removes nucleotide residues following the 3'-CCA terminus of tRNAs; can also add nucleotides to the ends of RNA molecules by using nucleoside diphosphates as substrates, but this may not be physiologically important. Probably plays a role in initiation of 16S rRNA degradation (leading to ribosome degradation) during starvation. This chain is Ribonuclease PH, found in Psychrobacter sp. (strain PRwf-1).